A 627-amino-acid polypeptide reads, in one-letter code: Coiled-coil domain-containing protein 22 (627 aa).

The tract at residues 1-321 (MEEADRILIH…VADVPATSQR (321 aa)) is sufficient for interaction with COMMD1. Positions 1–447 (MEEADRILIH…LQDCRELESS (447 aa)) are sufficicient and required for interaction with CCDC93. Ser-410 carries the phosphoserine modification. Residues 448 to 535 (RRLAEIQELH…NSLSGKLDRT (88 aa)) are a coiled coil.

Belongs to the CCDC22 family. Component of the commander complex consisting of the CCC subcomplex and the retriever subcomplex. Component of the CCC (COMMD/CCDC22/CCDC93) subcomplex consisting of COMMD1, COMMD2, COMMD3, COMMD4, COMMD5, COMMD6, COMMD7, COMMD8, COMMD9, COMMD10, CCDC22 and CCDC93. Forms a coiled-coil heterodimer with CCDC22; this heterodimer interacts with the guanine nucleotide exchange factor DENND10; the interaction is direct. Interacts with CUL1, CUL2, CUL3, SKP1, BTRC. Interacts with SNX17 and SNX31. Interacts with CPNE1 and CPNE4.

The protein localises to the endosome. It is found in the cytoplasm. Its subcellular location is the cytoskeleton. It localises to the microtubule organizing center. The protein resides in the centrosome. In terms of biological role, component of the commander complex that is essential for endosomal recycling of transmembrane cargos; the Commander complex is composed of composed of the CCC subcomplex and the retriever subcomplex. Component of the CCC complex, which is involved in the regulation of endosomal recycling of surface proteins, including integrins, signaling receptor and channels. Involved in regulation of NF-kappa-B signaling. Promotes ubiquitination of I-kappa-B-kinase subunit IKBKB and its subsequent proteasomal degradation leading to NF-kappa-B activation; the function may involve association with COMMD8 and a CUL1-dependent E3 ubiquitin ligase complex. May down-regulate NF-kappa-B activity via association with COMMD1 and involving a CUL2-dependent E3 ubiquitin ligase complex. Regulates the cellular localization of COMM domain-containing proteins, such as COMMD1 and COMMD10. Component of the CCC complex, which is involved in the regulation of endosomal recycling of surface proteins, including integrins, signaling receptor and channels. The CCC complex associates with SNX17, retriever and WASH complexes to prevent lysosomal degradation and promote cell surface recycling of numerous cargos such as integrins ITGA5:ITGB1. Plays a role in copper ion homeostasis. Involved in copper-dependent ATP7A trafficking between the trans-Golgi network and vesicles in the cell periphery; the function is proposed to depend on its association within the CCC complex and cooperation with the WASH complex on early endosomes. In Mus musculus (Mouse), this protein is Coiled-coil domain-containing protein 22 (Ccdc22).